A 354-amino-acid chain; its full sequence is MNTFGNIFKLTSFGESHGTAIGGVIDGCPAGIVLDMEFVQGELDKRRPGQSELTTSRNESDKVEFLSGIYEGKTIGTPIGFIVWNNNQHSSDYDSLKNVFRPSHADYTYFQKYRHYDHRGGGRSSARETIARVVAGAIAKLILQKKGIKITAYVSQVGDICLSKSYIQVDFSNIEKTAVRCPDLEIAKQMIALIQSVRLRGDTVGGVITCICHGVPVGLGNPVFGKLSAALSNAMMSINATKGFDYGMGFNGIHRKGSEANDLYYRNKDGKIVTKSNYSGGIQGGISSGEDIYFRVAFKPVATLLQGQLTVDKDGNEIQLEVKGRHDPCVLPRAVPIVESMAAMTILDYYLYNY.

Residue R46 coordinates NADP(+). Residues 123 to 125 (RSS), 239 to 240 (NA), G284, 299 to 303 (KPVAT), and R325 contribute to the FMN site.

Belongs to the chorismate synthase family. Homotetramer. The cofactor is FMNH2.

It catalyses the reaction 5-O-(1-carboxyvinyl)-3-phosphoshikimate = chorismate + phosphate. Its pathway is metabolic intermediate biosynthesis; chorismate biosynthesis; chorismate from D-erythrose 4-phosphate and phosphoenolpyruvate: step 7/7. Functionally, catalyzes the anti-1,4-elimination of the C-3 phosphate and the C-6 proR hydrogen from 5-enolpyruvylshikimate-3-phosphate (EPSP) to yield chorismate, which is the branch point compound that serves as the starting substrate for the three terminal pathways of aromatic amino acid biosynthesis. This reaction introduces a second double bond into the aromatic ring system. This chain is Chorismate synthase, found in Azobacteroides pseudotrichonymphae genomovar. CFP2.